Reading from the N-terminus, the 498-residue chain is Calcium-binding tyrosine phosphorylation-regulated protein (498 aa).

An RIIa domain is found at 12-49; it reads YGLKTLLEGVSRAILKINPPNITQFAAVYFKELIVFRE. Disordered stretches follow at residues 74 to 107, 135 to 164, and 247 to 279; these read GTTQEKEPECMEEQVETSVVSQEPTRMEKSTDTE, EETPEAACGGSPKPSTPKAVTPPSSPSPAA, and VDLGPKPKDDEAEPTTASSFPLQDEQDPPAYDQ. The segment covering 145–164 has biased composition (low complexity); sequence SPKPSTPKAVTPPSSPSPAA.

As to quaternary structure, interacts with FSCB. In terms of processing, phosphorylated on tyrosine residues during in vitro capacitation. Dephosphorylation affects its ability to bind calcium. Expressed in testis.

It localises to the cytoplasm. The protein localises to the cytoskeleton. Its subcellular location is the cell projection. It is found in the cilium. The protein resides in the flagellum. May function as a regulator of both motility- and head-associated functions such as capacitation and the acrosome reaction. Binds calcium in vitro. The chain is Calcium-binding tyrosine phosphorylation-regulated protein (CABYR) from Vulpes vulpes (Red fox).